We begin with the raw amino-acid sequence, 240 residues long: Uridylate kinase (240 aa).

Residue 12–15 participates in ATP binding; that stretch reads KLSG. Positions 20–25 are involved in allosteric activation by GTP; sequence GEQGFG. A UMP-binding site is contributed by Gly54. ATP contacts are provided by Gly55 and Arg59. Residues Asp74 and 135–142 contribute to the UMP site; that span reads TGNPYFST. Residues Asn163, Tyr169, and Asp172 each coordinate ATP.

Belongs to the UMP kinase family. Homohexamer.

It localises to the cytoplasm. The enzyme catalyses UMP + ATP = UDP + ADP. It functions in the pathway pyrimidine metabolism; CTP biosynthesis via de novo pathway; UDP from UMP (UMPK route): step 1/1. With respect to regulation, allosterically activated by GTP. Inhibited by UTP. Its function is as follows. Catalyzes the reversible phosphorylation of UMP to UDP. The polypeptide is Uridylate kinase (Bacillus cereus (strain ATCC 14579 / DSM 31 / CCUG 7414 / JCM 2152 / NBRC 15305 / NCIMB 9373 / NCTC 2599 / NRRL B-3711)).